The sequence spans 146 residues: 3-dehydroquinate dehydratase (146 aa).

Catalysis depends on Tyr-23, which acts as the Proton acceptor. 3 residues coordinate substrate: Asn-74, His-80, and Asp-87. The active-site Proton donor is His-100. Substrate is bound by residues 101–102 and Arg-111; that span reads IS.

Belongs to the type-II 3-dehydroquinase family. In terms of assembly, homododecamer.

The enzyme catalyses 3-dehydroquinate = 3-dehydroshikimate + H2O. The protein operates within metabolic intermediate biosynthesis; chorismate biosynthesis; chorismate from D-erythrose 4-phosphate and phosphoenolpyruvate: step 3/7. Functionally, catalyzes a trans-dehydration via an enolate intermediate. This is 3-dehydroquinate dehydratase from Bacillus cytotoxicus (strain DSM 22905 / CIP 110041 / 391-98 / NVH 391-98).